The following is a 255-amino-acid chain: Accessory gland-specific peptide 26Aa (255 aa).

The N-terminal stretch at 1–18 (MNLILLCSQILLLLFTVA) is a signal peptide. The tract at residues 86-110 (PINNSKSRKNSSTLPSQILTDKPNQ) is disordered. Polar residues predominate over residues 87-110 (INNSKSRKNSSTLPSQILTDKPNQ). N88, N95, and N136 each carry an N-linked (GlcNAc...) asparagine glycan. Disordered stretches follow at residues 177-196 (NAQN…SKDI) and 235-255 (NNPA…PSTT). Residues 183 to 192 (KSTKSCKKRP) show a composition bias toward basic residues. The segment covering 245-255 (KSPSEGNPSTT) has biased composition (polar residues).

It undergoes several cleavages as it is secreted and it is further processed in the recipient female. In terms of tissue distribution, main cells of the accessory glands of males.

The protein localises to the secreted. It localises to the extracellular space. This protein is transferred from male to female's hemolymph during mating, affecting egglaying and behavior after mating. The chain is Accessory gland-specific peptide 26Aa (Acp26Aa) from Drosophila sechellia (Fruit fly).